A 300-amino-acid chain; its full sequence is MKKLIVFAFIGLLSQLIDGSLGMAYGVTSTSLLLAFGITPAVASASVHLAEVVTTAASGVSHIKFGNVDKQTVYQLVIPGSIGAFLGAAFLSQLPGDVAKPYISLFLLLLGGYVLIRFLFQYKPALEKKHVPLNRKQSIPLGVIAGFADATGGGGWGPVTTPILLSRKGLSPRKVVGTVDTSEFAIAVSATAGFLISLGWEDVNWLWVFSLMAGGIIAAPIAAWLVQKFHPQLMGVLVGGFIILVNARTLINEWIANTAVHPLIYTAIGAIWLSAVLFVLSKIGNRNIVKTAVDVHLKEK.

Helical transmembrane passes span 4-24 (LIVF…LGMA), 33-53 (LLAF…AEVV), 76-96 (LVIP…QLPG), 102-122 (YISL…LFQY), 139-159 (IPLG…WGPV), 206-226 (LWVF…AWLV), 231-251 (PQLM…RTLI), and 260-280 (VHPL…LFVL).

Belongs to the 4-toluene sulfonate uptake permease (TSUP) (TC 2.A.102) family.

It localises to the cell membrane. In Bacillus subtilis (strain 168), this protein is Probable membrane transporter protein YtnM (ytnM).